The primary structure comprises 578 residues: 15-cis-phytoene desaturase, chloroplastic/chromoplastic (578 aa).

Residues 1–87 constitute a chloroplast and chromoplast transit peptide; sequence MDTGCLSSMN…PLENTINFLE (87 aa). FAD is bound by residues Ala115, 134–135, Lys142, 159–160, and Tyr165; these read EA and HI. Arg300 is a binding site for substrate. The FAD site is built by Ile342 and Asp531. Ala539 contacts substrate. Met541 contributes to the FAD binding site.

This sequence belongs to the carotenoid/retinoid oxidoreductase family. As to quaternary structure, homotetramer. Homotetramer is the active form of the enzyme. FAD serves as cofactor.

It localises to the plastid. The protein localises to the chloroplast. It is found in the chromoplast. The protein resides in the membrane. It catalyses the reaction 2 a plastoquinone + 15-cis-phytoene = 9,9',15-tri-cis-zeta-carotene + 2 a plastoquinol. Its pathway is carotenoid biosynthesis; lycopene biosynthesis. Inhibited by the herbicide norflurazon (NFZ). Functionally, converts phytoene into zeta-carotene via the intermediary of phytofluene by the symmetrical introduction of two double bonds at the C-11 and C-11' positions of phytoene with a concomitant isomerization of two neighboring double bonds at the C9 and C9' positions from trans to cis. Active with decylplastoquinone (DPQ) as substrate. Also active with other benzoquinones, which are strongly preferred over naphthoquinones as substrates. The chain is 15-cis-phytoene desaturase, chloroplastic/chromoplastic (PDS1) from Oryza sativa subsp. indica (Rice).